A 284-amino-acid polypeptide reads, in one-letter code: Tropomyosin (284 aa).

A disordered region spans residues 1–47 (MDAIKKKMQAMKIEKDNAMDRADAAEEKARQQQERVEKLEEELRDTQ). The stretch at 1-284 (MDAIKKKMQA…DQTFQELSGY (284 aa)) forms a coiled coil. Basic and acidic residues predominate over residues 12 to 38 (KIEKDNAMDRADAAEEKARQQQERVEK).

The protein belongs to the tropomyosin family.

Its function is as follows. Tropomyosin, in association with the troponin complex, plays a central role in the calcium dependent regulation of muscle contraction. The polypeptide is Tropomyosin (Trichinella spiralis (Trichina worm)).